The primary structure comprises 519 residues: Dihydropyrimidinase (519 aa).

Zn(2+)-binding residues include His67 and His69. At Ser79 the chain carries Phosphoserine. Lys159 is a binding site for Zn(2+). Lys159 is subject to N6-carboxylysine. Tyr164 serves as a coordination point for substrate. His192 and His248 together coordinate Zn(2+). Lys256 carries the N6-succinyllysine modification. Position 326 (Asp326) interacts with Zn(2+). Position 347 (Asn347) interacts with substrate. Thr510 carries the post-translational modification Phosphothreonine.

Belongs to the metallo-dependent hydrolases superfamily. Hydantoinase/dihydropyrimidinase family. As to quaternary structure, homotetramer. Zn(2+) is required as a cofactor. In terms of processing, carboxylation allows a single lysine to coordinate two zinc ions.

The enzyme catalyses 5,6-dihydrouracil + H2O = 3-(carbamoylamino)propanoate + H(+). Functionally, catalyzes the second step of the reductive pyrimidine degradation, the reversible hydrolytic ring opening of dihydropyrimidines. Can catalyze the ring opening of 5,6-dihydrouracil to N-carbamyl-alanine and of 5,6-dihydrothymine to N-carbamyl-amino isobutyrate. The sequence is that of Dihydropyrimidinase (Dpys) from Rattus norvegicus (Rat).